The following is a 328-amino-acid chain: Interleukin-12 subunit beta (328 aa).

The signal sequence occupies residues 1-22; that stretch reads MCHQQLVISWFSLVFLASPLVA. Residues 23–106 form the Ig-like C2-type domain; it reads IWELKKDVYV…LSHSLLLLHK (84 aa). Cystine bridges form between Cys-50–Cys-90, Cys-131–Cys-142, and Cys-170–Cys-193. The N-linked (GlcNAc...) asparagine glycan is linked to Asn-135. An N-linked (GlcNAc...) asparagine glycan is attached at Asn-222. Residues 237-328 form the Fibronectin type-III domain; the sequence is PPKNLQLKPL…WSEWASVPCS (92 aa). Cysteines 300 and 327 form a disulfide. A glycan (C-linked (Man) tryptophan) is linked at Trp-319.

This sequence belongs to the IL-12B family. Heterodimer with IL12A; disulfide-linked. The heterodimer is known as interleukin IL-12. Heterodimer with IL23A; disulfide-linked. The heterodimer is known as interleukin IL-23. Also secreted as a monomer. Interacts with NBR1; this interaction promotes IL-12 secretion. Known to be C-mannosylated in the recombinant protein; it is not yet known for sure if the wild-type protein is also modified.

It localises to the secreted. In terms of biological role, cytokine that can act as a growth factor for activated T and NK cells, enhance the lytic activity of NK/lymphokine-activated killer cells, and stimulate the production of IFN-gamma by resting PBMC. Associates with IL23A to form the IL-23 interleukin, a heterodimeric cytokine which functions in innate and adaptive immunity. IL-23 may constitute with IL-17 an acute response to infection in peripheral tissues. IL-23 binds to a heterodimeric receptor complex composed of IL12RB1 and IL23R, activates the Jak-Stat signaling cascade, stimulates memory rather than naive T-cells and promotes production of pro-inflammatory cytokines. IL-23 induces autoimmune inflammation and thus may be responsible for autoimmune inflammatory diseases and may be important for tumorigenesis. This Homo sapiens (Human) protein is Interleukin-12 subunit beta (IL12B).